Reading from the N-terminus, the 45-residue chain is Omega-hexatoxin-Hv2a (45 aa).

Cystine bridges form between Cys-4–Cys-18, Cys-11–Cys-24, and Cys-17–Cys-29.

Belongs to the neurotoxin 15 family. 02 (omega-actx) subfamily. In terms of tissue distribution, expressed by the venom gland.

Its subcellular location is the secreted. Potent inhibitor of insect (bee brain), but not mammalian (rat trigeminal neurons), voltage-gated calcium channels (Cav). In vivo, injection into lone star ticks (Amblyomma americanum) induces curling of all eight legs into closed loops, followed by death. The polypeptide is Omega-hexatoxin-Hv2a (Hadronyche versuta (Blue mountains funnel-web spider)).